An 85-amino-acid polypeptide reads, in one-letter code: Sec-independent protein translocase protein TatA (85 aa).

The chain crosses the membrane as a helical span at residues 1-21 (MGGISIWQLLIIALIVVLLFG). The tract at residues 43-85 (MSSEEDKKALEDAEAAKPVQTAQTAQPTQQATEKKPESNKEQA) is disordered. Basic and acidic residues predominate over residues 46–57 (EEDKKALEDAEA). Residues 58–73 (AKPVQTAQTAQPTQQA) are compositionally biased toward low complexity. Residues 74–85 (TEKKPESNKEQA) show a composition bias toward basic and acidic residues.

This sequence belongs to the TatA/E family. In terms of assembly, the Tat system comprises two distinct complexes: a TatABC complex, containing multiple copies of TatA, TatB and TatC subunits, and a separate TatA complex, containing only TatA subunits. Substrates initially bind to the TatABC complex, which probably triggers association of the separate TatA complex to form the active translocon.

It localises to the cell inner membrane. Functionally, part of the twin-arginine translocation (Tat) system that transports large folded proteins containing a characteristic twin-arginine motif in their signal peptide across membranes. TatA could form the protein-conducting channel of the Tat system. The sequence is that of Sec-independent protein translocase protein TatA from Shewanella sp. (strain MR-4).